The sequence spans 116 residues: Large ribosomal subunit protein uL24 (116 aa).

Belongs to the universal ribosomal protein uL24 family. As to quaternary structure, part of the 50S ribosomal subunit.

Its function is as follows. One of two assembly initiator proteins, it binds directly to the 5'-end of the 23S rRNA, where it nucleates assembly of the 50S subunit. In terms of biological role, one of the proteins that surrounds the polypeptide exit tunnel on the outside of the subunit. The sequence is that of Large ribosomal subunit protein uL24 from Protochlamydia amoebophila (strain UWE25).